A 314-amino-acid chain; its full sequence is GATA zinc finger domain-containing protein 19 (314 aa).

The sequence is that of GATA zinc finger domain-containing protein 19 (gtaS) from Dictyostelium discoideum (Social amoeba).